Reading from the N-terminus, the 244-residue chain is MPTLFISDLHLEIEKPDLTRFFFNFLDKVAPNAEALYILGDFFEVWVGDDEQSPLQVEVAQRLHKLAEAGTHIHLMHGNRDFLIGETYAKQCGATLLAEPHALDLYGVPSLLMHGDSLCTLDAAYQKARATFRNPAFQSQFLSRPLDQRQLTARQMRQISMAKNQGKAEVIMDVAPDEVINTFNTYGIELLIHGHTHRPDTHRYNLPQGEVKRIVLGDWGEETWYGRADADGFQLLNLKAEDIA.

Mn(2+) is bound by residues Asp-8, His-10, Asp-41, Asn-79, and His-114. Residue 79 to 80 (NR) coordinates substrate. Substrate contacts are provided by Asp-122, Ser-160, Asn-164, Lys-167, and His-195. His-195 and His-197 together coordinate Mn(2+).

Belongs to the LpxH family. Mn(2+) serves as cofactor.

The protein localises to the cell inner membrane. It carries out the reaction UDP-2-N,3-O-bis[(3R)-3-hydroxytetradecanoyl]-alpha-D-glucosamine + H2O = 2-N,3-O-bis[(3R)-3-hydroxytetradecanoyl]-alpha-D-glucosaminyl 1-phosphate + UMP + 2 H(+). It participates in glycolipid biosynthesis; lipid IV(A) biosynthesis; lipid IV(A) from (3R)-3-hydroxytetradecanoyl-[acyl-carrier-protein] and UDP-N-acetyl-alpha-D-glucosamine: step 4/6. Functionally, hydrolyzes the pyrophosphate bond of UDP-2,3-diacylglucosamine to yield 2,3-diacylglucosamine 1-phosphate (lipid X) and UMP by catalyzing the attack of water at the alpha-P atom. Involved in the biosynthesis of lipid A, a phosphorylated glycolipid that anchors the lipopolysaccharide to the outer membrane of the cell. The protein is UDP-2,3-diacylglucosamine hydrolase of Hahella chejuensis (strain KCTC 2396).